The sequence spans 82 residues: Small ribosomal subunit protein uS17 (82 aa).

The protein belongs to the universal ribosomal protein uS17 family. As to quaternary structure, part of the 30S ribosomal subunit.

In terms of biological role, one of the primary rRNA binding proteins, it binds specifically to the 5'-end of 16S ribosomal RNA. This is Small ribosomal subunit protein uS17 from Phenylobacterium zucineum (strain HLK1).